Reading from the N-terminus, the 716-residue chain is Polyribonucleotide nucleotidyltransferase (716 aa).

Mg(2+)-binding residues include D495 and D501. The KH domain maps to 562-621 (PRLFRIQINPEQIGLVIGPGGKTIRSITEQTGAKIDIEDTGAVTISAVDADSALRAKSII). Residues 631–699 (GDVYIGKVTR…QKGRVNLTRK (69 aa)) form the S1 motif domain.

Belongs to the polyribonucleotide nucleotidyltransferase family. Requires Mg(2+) as cofactor.

Its subcellular location is the cytoplasm. It catalyses the reaction RNA(n+1) + phosphate = RNA(n) + a ribonucleoside 5'-diphosphate. In terms of biological role, involved in mRNA degradation. Catalyzes the phosphorolysis of single-stranded polyribonucleotides processively in the 3'- to 5'-direction. In Synechococcus elongatus (strain ATCC 33912 / PCC 7942 / FACHB-805) (Anacystis nidulans R2), this protein is Polyribonucleotide nucleotidyltransferase.